A 569-amino-acid chain; its full sequence is CUE domain-containing protein 5 (569 aa).

In terms of domain architecture, CUE spans 17 to 60 (MAEKARATLKEAFPNTDDAIIRAVLAASGYKLEPAFNALLGLSD). Disordered regions lie at residues 67 to 139 (MEQA…DDYS), 175 to 275 (DGEE…SSSA), and 311 to 569 (EELE…GKET). Residues 79–100 (AAHDDPVQRQLEEDERCARELA) show a composition bias toward basic and acidic residues. The span at 104-113 (NSHRPERRRK) shows a compositional bias: basic residues. The span at 234-249 (SDPHMLNEKDFERLRL) shows a compositional bias: basic and acidic residues. Positions 250-274 (ESSSSPMMRRSSLNSNRRSVESSSS) are enriched in low complexity. The span at 329–340 (VVVEKKPDESRK) shows a compositional bias: basic and acidic residues. Residues 347-364 (ETVSEEQMGSSNAKSKVL) show a composition bias toward polar residues. Basic and acidic residues-rich tracts occupy residues 367–381 (EPKD…KTET), 399–500 (ISEK…KETD), and 507–558 (KEEK…KIEE).

The protein resides in the cytoplasm. The polypeptide is CUE domain-containing protein 5 (Schizosaccharomyces pombe (strain 972 / ATCC 24843) (Fission yeast)).